Reading from the N-terminus, the 192-residue chain is Secreted phosphoprotein 24 (192 aa).

The signal sequence occupies residues 1 to 29 (MGKTPEDFERHTMRSLIFVLALSVFTCSG). 2 disulfides stabilise this stretch: Cys-92/Cys-103 and Cys-116/Cys-134. The tract at residues 155-192 (TDPRKRGSSRSEAFSSRGRGHSNGDWRKPDYTSPGKVE) is disordered.

This sequence belongs to the SPP2 family. Multiply phosphorylated at serine residues.

The protein resides in the secreted. Its function is as follows. Could coordinate an aspect of bone turnover. The protein is Secreted phosphoprotein 24 (SPP2) of Gallus gallus (Chicken).